A 194-amino-acid polypeptide reads, in one-letter code: NADH-quinone oxidoreductase subunit B (194 aa).

Positions 72, 73, 137, and 167 each coordinate [4Fe-4S] cluster.

The protein belongs to the complex I 20 kDa subunit family. In terms of assembly, NDH-1 is composed of 14 different subunits. Subunits NuoB, C, D, E, F, and G constitute the peripheral sector of the complex. [4Fe-4S] cluster is required as a cofactor.

The protein localises to the cell inner membrane. The enzyme catalyses a quinone + NADH + 5 H(+)(in) = a quinol + NAD(+) + 4 H(+)(out). NDH-1 shuttles electrons from NADH, via FMN and iron-sulfur (Fe-S) centers, to quinones in the respiratory chain. Couples the redox reaction to proton translocation (for every two electrons transferred, four hydrogen ions are translocated across the cytoplasmic membrane), and thus conserves the redox energy in a proton gradient. This Granulibacter bethesdensis (strain ATCC BAA-1260 / CGDNIH1) protein is NADH-quinone oxidoreductase subunit B.